Consider the following 185-residue polypeptide: Ribosome maturation factor RimP (185 aa).

The segment at 162 to 185 is disordered; the sequence is VRLERAADGAPERGGDRGDTEESR.

This sequence belongs to the RimP family.

Its subcellular location is the cytoplasm. Required for maturation of 30S ribosomal subunits. In Saccharopolyspora erythraea (strain ATCC 11635 / DSM 40517 / JCM 4748 / NBRC 13426 / NCIMB 8594 / NRRL 2338), this protein is Ribosome maturation factor RimP.